The following is a 303-amino-acid chain: D-alanine--D-alanine ligase (303 aa).

The ATP-grasp domain occupies 104–300; sequence KLLWNAVGLP…FEKLVERVLE (197 aa). 132 to 187 contacts ATP; that stretch reads IAKLSLPVFVKPSSEGSSVGVFKVKTKEELLPAITAALEFDTIVLVEEFLTGAEYS. Residues Asp-254, Glu-267, and Asn-269 each coordinate Mg(2+).

The protein belongs to the D-alanine--D-alanine ligase family. The cofactor is Mg(2+). Mn(2+) is required as a cofactor.

It is found in the cytoplasm. It carries out the reaction 2 D-alanine + ATP = D-alanyl-D-alanine + ADP + phosphate + H(+). It functions in the pathway cell wall biogenesis; peptidoglycan biosynthesis. Functionally, cell wall formation. This Haemophilus ducreyi (strain 35000HP / ATCC 700724) protein is D-alanine--D-alanine ligase.